The sequence spans 157 residues: 2-C-methyl-D-erythritol 2,4-cyclodiphosphate synthase (157 aa).

Residues Asp8 and His10 each contribute to the a divalent metal cation site. 4-CDP-2-C-methyl-D-erythritol 2-phosphate contacts are provided by residues 8–10 (DVH) and 34–35 (HS). His42 is an a divalent metal cation binding site. 4-CDP-2-C-methyl-D-erythritol 2-phosphate is bound by residues 56 to 58 (DIG), 61 to 65 (FPDTD), 100 to 106 (AQAPKMA), 132 to 135 (TTTE), Phe139, and Arg142.

It belongs to the IspF family. Homotrimer. A divalent metal cation is required as a cofactor.

It catalyses the reaction 4-CDP-2-C-methyl-D-erythritol 2-phosphate = 2-C-methyl-D-erythritol 2,4-cyclic diphosphate + CMP. The protein operates within isoprenoid biosynthesis; isopentenyl diphosphate biosynthesis via DXP pathway; isopentenyl diphosphate from 1-deoxy-D-xylulose 5-phosphate: step 4/6. Functionally, involved in the biosynthesis of isopentenyl diphosphate (IPP) and dimethylallyl diphosphate (DMAPP), two major building blocks of isoprenoid compounds. Catalyzes the conversion of 4-diphosphocytidyl-2-C-methyl-D-erythritol 2-phosphate (CDP-ME2P) to 2-C-methyl-D-erythritol 2,4-cyclodiphosphate (ME-CPP) with a corresponding release of cytidine 5-monophosphate (CMP). The polypeptide is 2-C-methyl-D-erythritol 2,4-cyclodiphosphate synthase (Pseudomonas paraeruginosa (strain DSM 24068 / PA7) (Pseudomonas aeruginosa (strain PA7))).